The chain runs to 243 residues: 2,3-bisphosphoglycerate-dependent phosphoglycerate mutase (243 aa).

Substrate is bound by residues R8 to N15, T21 to G22, R60, E87 to Y90, K98, R114 to R115, and G183 to N184. H9 acts as the Tele-phosphohistidine intermediate in catalysis. The Proton donor/acceptor role is filled by E87.

Belongs to the phosphoglycerate mutase family. BPG-dependent PGAM subfamily.

The enzyme catalyses (2R)-2-phosphoglycerate = (2R)-3-phosphoglycerate. It participates in carbohydrate degradation; glycolysis; pyruvate from D-glyceraldehyde 3-phosphate: step 3/5. Catalyzes the interconversion of 2-phosphoglycerate and 3-phosphoglycerate. In Clostridium acetobutylicum (strain ATCC 824 / DSM 792 / JCM 1419 / IAM 19013 / LMG 5710 / NBRC 13948 / NRRL B-527 / VKM B-1787 / 2291 / W), this protein is 2,3-bisphosphoglycerate-dependent phosphoglycerate mutase.